A 419-amino-acid chain; its full sequence is Dimethylamine methyltransferase MtbB2 (419 aa).

O308 is a non-standard amino acid (pyrrolysine).

The protein belongs to the dimethylamine methyltransferase family.

It carries out the reaction Co(I)-[dimethylamine-specific corrinoid protein] + dimethylamine + H(+) = methyl-Co(III)-[dimethylamine-specific corrinoid protein] + methylamine. It participates in one-carbon metabolism; methanogenesis from dimethylamine. In terms of biological role, catalyzes the transfer of a methyl group from dimethylamine to the corrinoid cofactor of MtbC. No evidence for expression of this protein has been found after growth under presumably inducing conditions. This chain is Dimethylamine methyltransferase MtbB2, found in Methanosarcina barkeri.